Reading from the N-terminus, the 141-residue chain is Nucleoside diphosphate kinase (141 aa).

Residues K11, F59, R87, T93, R104, and N114 each coordinate ATP. H117 functions as the Pros-phosphohistidine intermediate in the catalytic mechanism.

It belongs to the NDK family. As to quaternary structure, homotetramer. Mg(2+) serves as cofactor.

It is found in the cytoplasm. It catalyses the reaction a 2'-deoxyribonucleoside 5'-diphosphate + ATP = a 2'-deoxyribonucleoside 5'-triphosphate + ADP. The catalysed reaction is a ribonucleoside 5'-diphosphate + ATP = a ribonucleoside 5'-triphosphate + ADP. Functionally, major role in the synthesis of nucleoside triphosphates other than ATP. The ATP gamma phosphate is transferred to the NDP beta phosphate via a ping-pong mechanism, using a phosphorylated active-site intermediate. The protein is Nucleoside diphosphate kinase of Proteus mirabilis (strain HI4320).